The chain runs to 468 residues: Acid phosphatase PHO1 (468 aa).

The N-terminal stretch at 1-22 is a signal peptide; sequence MFSPILSLEIILALATLQSVFA. His-84 serves as the catalytic Nucleophile. N-linked (GlcNAc...) asparagine glycosylation is found at Asn-163, Asn-196, Asn-256, and Asn-321. Asp-346 (proton donor) is an active-site residue. 2 N-linked (GlcNAc...) asparagine glycosylation sites follow: Asn-360 and Asn-453.

This sequence belongs to the histidine acid phosphatase family.

It catalyses the reaction a phosphate monoester + H2O = an alcohol + phosphate. This chain is Acid phosphatase PHO1 (PHO1), found in Komagataella pastoris (Yeast).